The primary structure comprises 174 residues: Beta-lactoglobulin (174 aa).

An N-terminal signal peptide occupies residues 1-18; the sequence is MKFLLLTVGLTSICAIQA. Disulfide bonds link cysteine 79/cysteine 172 and cysteine 122/cysteine 134.

This sequence belongs to the calycin superfamily. Lipocalin family. In terms of assembly, monomer.

It is found in the secreted. In terms of biological role, lactoglobulin is the primary component of whey, it binds retinol and is probably involved in the transport of that molecule. The polypeptide is Beta-lactoglobulin (LGB) (Trichosurus vulpecula (Brush-tailed possum)).